A 446-amino-acid chain; its full sequence is Tubulin beta-6 chain (446 aa).

Residues 1-4 (MREI) carry the MREI motif motif. The GTP site is built by Gln11, Glu69, Ser138, Gly142, Thr143, Gly144, Asn204, and Asn226. Residue Glu69 coordinates Mg(2+). The segment at 419–446 (VSEYQQYQDATADVEEYEEAEASPEKET) is disordered. The span at 430–440 (ADVEEYEEAEA) shows a compositional bias: acidic residues.

Belongs to the tubulin family. As to quaternary structure, dimer of alpha and beta chains. A typical microtubule is a hollow water-filled tube with an outer diameter of 25 nm and an inner diameter of 15 nM. Alpha-beta heterodimers associate head-to-tail to form protofilaments running lengthwise along the microtubule wall with the beta-tubulin subunit facing the microtubule plus end conferring a structural polarity. Microtubules usually have 13 protofilaments but different protofilament numbers can be found in some organisms and specialized cells. Mg(2+) is required as a cofactor. Some glutamate residues at the C-terminus are polyglycylated, resulting in polyglycine chains on the gamma-carboxyl group. Glycylation is mainly limited to tubulin incorporated into axonemes (cilia and flagella) whereas glutamylation is prevalent in neuronal cells, centrioles, axonemes, and the mitotic spindle. Both modifications can coexist on the same protein on adjacent residues, and lowering polyglycylation levels increases polyglutamylation, and reciprocally. The precise function of polyglycylation is still unclear. Post-translationally, some glutamate residues at the C-terminus are polyglutamylated, resulting in polyglutamate chains on the gamma-carboxyl group. Polyglutamylation plays a key role in microtubule severing by spastin (SPAST). SPAST preferentially recognizes and acts on microtubules decorated with short polyglutamate tails: severing activity by SPAST increases as the number of glutamates per tubulin rises from one to eight, but decreases beyond this glutamylation threshold. Highly expressed in bone marrow.

The protein localises to the cytoplasm. Its subcellular location is the cytoskeleton. In terms of biological role, tubulin is the major constituent of microtubules, a cylinder consisting of laterally associated linear protofilaments composed of alpha- and beta-tubulin heterodimers. Microtubules grow by the addition of GTP-tubulin dimers to the microtubule end, where a stabilizing cap forms. Below the cap, tubulin dimers are in GDP-bound state, owing to GTPase activity of alpha-tubulin. The sequence is that of Tubulin beta-6 chain from Gallus gallus (Chicken).